The following is a 393-amino-acid chain: Formate-dependent phosphoribosylglycinamide formyltransferase (393 aa).

Residues 22-23 and Glu82 contribute to the N(1)-(5-phospho-beta-D-ribosyl)glycinamide site; that span reads EL. ATP is bound by residues Arg114, Lys155, 160-165, 195-198, and Glu203; these read SSGKGQ and EGFV. The ATP-grasp domain occupies 119-308; the sequence is RLAAEELGLV…EFALHVRAIL (190 aa). Mg(2+) contacts are provided by Glu267 and Glu279. Residues Asp286, Lys356, and 363–364 each bind N(1)-(5-phospho-beta-D-ribosyl)glycinamide; that span reads RR.

The protein belongs to the PurK/PurT family. In terms of assembly, homodimer.

It catalyses the reaction N(1)-(5-phospho-beta-D-ribosyl)glycinamide + formate + ATP = N(2)-formyl-N(1)-(5-phospho-beta-D-ribosyl)glycinamide + ADP + phosphate + H(+). The protein operates within purine metabolism; IMP biosynthesis via de novo pathway; N(2)-formyl-N(1)-(5-phospho-D-ribosyl)glycinamide from N(1)-(5-phospho-D-ribosyl)glycinamide (formate route): step 1/1. In terms of biological role, involved in the de novo purine biosynthesis. Catalyzes the transfer of formate to 5-phospho-ribosyl-glycinamide (GAR), producing 5-phospho-ribosyl-N-formylglycinamide (FGAR). Formate is provided by PurU via hydrolysis of 10-formyl-tetrahydrofolate. The chain is Formate-dependent phosphoribosylglycinamide formyltransferase from Solidesulfovibrio magneticus (strain ATCC 700980 / DSM 13731 / RS-1) (Desulfovibrio magneticus).